A 600-amino-acid chain; its full sequence is Oligopeptide-binding protein OppA (600 aa).

The signal sequence occupies residues 1 to 22 (MNKLKVTLLASSVVLAATLLSA). Cys-23 carries N-palmitoyl cysteine lipidation. A lipid anchor (S-diacylglycerol cysteine) is attached at Cys-23.

It belongs to the bacterial solute-binding protein 5 family. In terms of assembly, the complex is composed of two ATP-binding proteins (OppD and OppF), two transmembrane proteins (OppB and OppC) and a solute-binding protein (OppA).

It is found in the cell membrane. Its function is as follows. Part of the ABC transporter complex OppABCDF involved in the uptake of oligopeptides. The protein is Oligopeptide-binding protein OppA of Lactococcus lactis subsp. cremoris (strain SK11).